Consider the following 255-residue polypeptide: Cullin-like protein 3 (255 aa).

Belongs to the cullin family.

This chain is Cullin-like protein 3, found in Arabidopsis thaliana (Mouse-ear cress).